A 201-amino-acid chain; its full sequence is Pyridoxal 5'-phosphate synthase subunit PdxT (201 aa).

Residue 49 to 51 (GES) participates in L-glutamine binding. The active-site Nucleophile is the C81. Residues R110 and 139-140 (IR) contribute to the L-glutamine site. Residues H180 and E182 each act as charge relay system in the active site.

It belongs to the glutaminase PdxT/SNO family. As to quaternary structure, in the presence of PdxS, forms a dodecamer of heterodimers. Only shows activity in the heterodimer.

It catalyses the reaction aldehydo-D-ribose 5-phosphate + D-glyceraldehyde 3-phosphate + L-glutamine = pyridoxal 5'-phosphate + L-glutamate + phosphate + 3 H2O + H(+). The enzyme catalyses L-glutamine + H2O = L-glutamate + NH4(+). It participates in cofactor biosynthesis; pyridoxal 5'-phosphate biosynthesis. Catalyzes the hydrolysis of glutamine to glutamate and ammonia as part of the biosynthesis of pyridoxal 5'-phosphate. The resulting ammonia molecule is channeled to the active site of PdxS. In Salinispora arenicola (strain CNS-205), this protein is Pyridoxal 5'-phosphate synthase subunit PdxT.